A 241-amino-acid polypeptide reads, in one-letter code: Ion-translocating oxidoreductase complex subunit E (241 aa).

6 helical membrane passes run 22 to 42 (LLGL…IGLG), 69 to 89 (IPIY…VIKA), 91 to 111 (AFNL…NCIV), 124 to 144 (VLVS…TMFL), 157 to 177 (LFFG…IEVL), and 182 to 202 (VFLL…VLAG).

Belongs to the NqrDE/RnfAE family. The complex is composed of six subunits: RnfA, RnfB, RnfC, RnfD, RnfE and RnfG.

The protein resides in the cell inner membrane. Its function is as follows. Part of a membrane-bound complex that couples electron transfer with translocation of ions across the membrane. The chain is Ion-translocating oxidoreductase complex subunit E from Buchnera aphidicola subsp. Baizongia pistaciae (strain Bp).